The primary structure comprises 298 residues: DNA repair protein RecO (298 aa).

It belongs to the RecO family.

Functionally, involved in DNA repair and RecF pathway recombination. The polypeptide is DNA repair protein RecO (Cupriavidus metallidurans (strain ATCC 43123 / DSM 2839 / NBRC 102507 / CH34) (Ralstonia metallidurans)).